Reading from the N-terminus, the 233-residue chain is Enolase-phosphatase E1 (233 aa).

The protein belongs to the HAD-like hydrolase superfamily. MasA/MtnC family. In terms of assembly, monomer. Mg(2+) is required as a cofactor.

The catalysed reaction is 5-methylsulfanyl-2,3-dioxopentyl phosphate + H2O = 1,2-dihydroxy-5-(methylsulfanyl)pent-1-en-3-one + phosphate. The protein operates within amino-acid biosynthesis; L-methionine biosynthesis via salvage pathway; L-methionine from S-methyl-5-thio-alpha-D-ribose 1-phosphate: step 3/6. Its pathway is amino-acid biosynthesis; L-methionine biosynthesis via salvage pathway; L-methionine from S-methyl-5-thio-alpha-D-ribose 1-phosphate: step 4/6. Its function is as follows. Bifunctional enzyme that catalyzes the enolization of 2,3-diketo-5-methylthiopentyl-1-phosphate (DK-MTP-1-P) into the intermediate 2-hydroxy-3-keto-5-methylthiopentenyl-1-phosphate (HK-MTPenyl-1-P), which is then dephosphorylated to form the acireductone 1,2-dihydroxy-3-keto-5-methylthiopentene (DHK-MTPene). This Hahella chejuensis (strain KCTC 2396) protein is Enolase-phosphatase E1.